We begin with the raw amino-acid sequence, 289 residues long: Mas-related G-protein coupled receptor member G (289 aa).

Residues 1-13 are Extracellular-facing; sequence MFGLFGLWRTFDS. A helical membrane pass occupies residues 14-34; sequence VVFYLTLIVGLGGPVGNGLVL. The Cytoplasmic segment spans residues 35-42; it reads WNLGFRIK. A helical transmembrane segment spans residues 43 to 63; it reads KGPFSIYLLHLAAADFLFLSC. Topologically, residues 64–78 are extracellular; it reads RVGFSVAQAALGAQD. A helical membrane pass occupies residues 79 to 99; sequence TLYFVLTFLWFAVGLWLLAAF. Residues 100-120 are Cytoplasmic-facing; the sequence is SVERCLSDLFPACYQGCRPRH. The helical transmembrane segment at 121–141 threads the bilayer; it reads ASAVLCALVWTPTLPAVPLPA. The Extracellular segment spans residues 142–163; sequence NACGLLRNSACPLVCPRYHVAS. The chain crosses the membrane as a helical span at residues 164–184; sequence VTWFLVLARVAWTAGVVLFVW. Residues 185-195 are Cytoplasmic-facing; the sequence is VTCCSTRPRPR. A helical membrane pass occupies residues 196–216; that stretch reads LYGIVLGALLLLFFCGLPSVF. Over 217–221 the chain is Extracellular; that stretch reads YWSLQ. A helical membrane pass occupies residues 222–242; it reads PLLNFLLPVFSPLATLLACVN. Residues 243–289 lie on the Cytoplasmic side of the membrane; that stretch reads SSSKPLIYSGLGRQPGKREPLRSVLRRALGEGAELGARGQSLPMGLL.

This sequence belongs to the G-protein coupled receptor 1 family. Mas subfamily.

It localises to the cell membrane. Functionally, orphan receptor. May regulate nociceptor function and/or development, including the sensation or modulation of pain. This is Mas-related G-protein coupled receptor member G (MRGPRG) from Homo sapiens (Human).